The following is a 478-amino-acid chain: Aspartyl/glutamyl-tRNA(Asn/Gln) amidotransferase subunit B (478 aa).

Belongs to the GatB/GatE family. GatB subfamily. Heterotrimer of A, B and C subunits.

It carries out the reaction L-glutamyl-tRNA(Gln) + L-glutamine + ATP + H2O = L-glutaminyl-tRNA(Gln) + L-glutamate + ADP + phosphate + H(+). The enzyme catalyses L-aspartyl-tRNA(Asn) + L-glutamine + ATP + H2O = L-asparaginyl-tRNA(Asn) + L-glutamate + ADP + phosphate + 2 H(+). In terms of biological role, allows the formation of correctly charged Asn-tRNA(Asn) or Gln-tRNA(Gln) through the transamidation of misacylated Asp-tRNA(Asn) or Glu-tRNA(Gln) in organisms which lack either or both of asparaginyl-tRNA or glutaminyl-tRNA synthetases. The reaction takes place in the presence of glutamine and ATP through an activated phospho-Asp-tRNA(Asn) or phospho-Glu-tRNA(Gln). The polypeptide is Aspartyl/glutamyl-tRNA(Asn/Gln) amidotransferase subunit B (Pseudothermotoga lettingae (strain ATCC BAA-301 / DSM 14385 / NBRC 107922 / TMO) (Thermotoga lettingae)).